A 410-amino-acid polypeptide reads, in one-letter code: 2,3-bisphosphoglycerate-independent phosphoglycerate mutase (410 aa).

Belongs to the BPG-independent phosphoglycerate mutase family. A-PGAM subfamily.

It carries out the reaction (2R)-2-phosphoglycerate = (2R)-3-phosphoglycerate. Its pathway is carbohydrate degradation; glycolysis; pyruvate from D-glyceraldehyde 3-phosphate: step 3/5. Functionally, catalyzes the interconversion of 2-phosphoglycerate and 3-phosphoglycerate. This Pyrococcus abyssi (strain GE5 / Orsay) protein is 2,3-bisphosphoglycerate-independent phosphoglycerate mutase.